Here is a 97-residue protein sequence, read N- to C-terminus: Putative CC-type chemokine U83 (97 aa).

Cystine bridges form between Cys32–Cys62 and Cys33–Cys76.

It belongs to the intercrine beta (chemokine CC) family. Highly divergent.

The polypeptide is Putative CC-type chemokine U83 (U83) (Human herpesvirus 6A (strain Uganda-1102) (HHV-6 variant A)).